The primary structure comprises 255 residues: Proteasome subunit alpha type-3 (255 aa).

Ser-2 is subject to N-acetylserine. 3 positions are modified to N6-acetyllysine: Lys-57, Lys-206, and Lys-230. A phosphoserine mark is found at Ser-243 and Ser-250.

It belongs to the peptidase T1A family. In terms of assembly, the 26S proteasome consists of a 20S proteasome core and two 19S regulatory subunits. The 20S proteasome core is a barrel-shaped complex made of 28 subunits that are arranged in four stacked rings. The two outer rings are each formed by seven alpha subunits, and the two inner rings are formed by seven beta subunits. The proteolytic activity is exerted by three beta-subunits PSMB5, PSMB6 and PSMB7. Interacts with AURKB. Interacts with CDKN1A. Interacts with MDM2 and RB1. Interacts with the C-terminus of TBXA2R isoform 2. Interacts with DNAJB2. In terms of tissue distribution, detected in liver (at protein level).

Its subcellular location is the cytoplasm. It localises to the nucleus. In terms of biological role, component of the 20S core proteasome complex involved in the proteolytic degradation of most intracellular proteins. This complex plays numerous essential roles within the cell by associating with different regulatory particles. Associated with two 19S regulatory particles, forms the 26S proteasome and thus participates in the ATP-dependent degradation of ubiquitinated proteins. The 26S proteasome plays a key role in the maintenance of protein homeostasis by removing misfolded or damaged proteins that could impair cellular functions, and by removing proteins whose functions are no longer required. Associated with the PA200 or PA28, the 20S proteasome mediates ubiquitin-independent protein degradation. This type of proteolysis is required in several pathways including spermatogenesis (20S-PA200 complex) or generation of a subset of MHC class I-presented antigenic peptides (20S-PA28 complex). Binds to the C-terminus of CDKN1A and thereby mediates its degradation. Negatively regulates the membrane trafficking of the cell-surface thromboxane A2 receptor (TBXA2R) isoform 2. The protein is Proteasome subunit alpha type-3 (Psma3) of Mus musculus (Mouse).